The following is a 232-amino-acid chain: Ornithine carbamoyltransferase (232 aa).

Carbamoyl phosphate is bound by residues Gln-15, Arg-39, and 66–69 (HPTQ). Residues Asn-99, Asp-163, and 167–168 (SM) each bind L-ornithine. Residues 204–207 (HCLP) and Thr-232 contribute to the carbamoyl phosphate site.

Belongs to the aspartate/ornithine carbamoyltransferase superfamily. OTCase family.

Its subcellular location is the cytoplasm. The catalysed reaction is carbamoyl phosphate + L-ornithine = L-citrulline + phosphate + H(+). It participates in amino-acid biosynthesis; L-arginine biosynthesis; L-arginine from L-ornithine and carbamoyl phosphate: step 1/3. Its function is as follows. Reversibly catalyzes the transfer of the carbamoyl group from carbamoyl phosphate (CP) to the N(epsilon) atom of ornithine (ORN) to produce L-citrulline. The sequence is that of Ornithine carbamoyltransferase (argF) from Neisseria sicca.